Consider the following 433-residue polypeptide: Serine/threonine-protein kinase DCLK1 (433 aa).

The disordered stretch occupies residues 1–74 (MLELIEVNGT…GEEESDEGFQ (74 aa)). Phosphoserine occurs at positions 23, 25, 27, 30, 40, 45, 46, 48, 57, and 69. The segment covering 40–57 (SQHGGSSTSLSSTKVCSS) has biased composition (low complexity). Residues 59–71 (DENDGPGEEESDE) show a composition bias toward acidic residues. Positions 83–340 (YKVGRTIGDG…AVQVLEHPWV (258 aa)) constitute a Protein kinase domain. ATP is bound by residues 89-97 (IGDGNFAVV) and K112. Residue D204 is the Proton acceptor of the active site. Y213 carries the post-translational modification Phosphotyrosine. The span at 388-400 (QVFRRRRNQDVRG) shows a compositional bias: basic and acidic residues. Positions 388 to 433 (QVFRRRRNQDVRGRYKAQPAPPELNSESEDYSPSSSETVRSPNSPF) are disordered. Phosphoserine occurs at positions 419, 428, and 431.

This sequence belongs to the protein kinase superfamily. CAMK Ser/Thr protein kinase family. CaMK subfamily.

It carries out the reaction L-seryl-[protein] + ATP = O-phospho-L-seryl-[protein] + ADP + H(+). The catalysed reaction is L-threonyl-[protein] + ATP = O-phospho-L-threonyl-[protein] + ADP + H(+). Its function is as follows. Probable kinase that may be involved in a calcium-signaling pathway controlling neuronal migration in the developing brain. May also participate in functions of the mature nervous system. This is Serine/threonine-protein kinase DCLK1 (Dclk1) from Rattus norvegicus (Rat).